Consider the following 386-residue polypeptide: bHLH transcription factor RHL1 (386 aa).

The interval 119 to 186 (FTGSLNGTQP…RRGQATDPHS (68 aa)) is disordered. The span at 127–137 (QPQQHFQHPPQ) shows a compositional bias: low complexity. Polar residues predominate over residues 138-151 (GNSNQIQGQNFGAT). The interval 180-193 (QATDPHSIAERLRR) is basic motif; degenerate. The bHLH domain occupies 180 to 229 (QATDPHSIAERLRRERIAERMKALQELVPNANKTDKASMLDEIIDYVKFL). Residues 194–229 (ERIAERMKALQELVPNANKTDKASMLDEIIDYVKFL) are helix-loop-helix motif.

Expressed in root epidermal cells.

The protein localises to the nucleus. Its function is as follows. Transcription factor that regulates the development of root hairs. The sequence is that of bHLH transcription factor RHL1 from Lotus japonicus (Lotus corniculatus var. japonicus).